We begin with the raw amino-acid sequence, 552 residues long: Low-affinity Fe(2+) transport protein (552 aa).

At 1 to 97 (MGKIAEFLGN…DFLVRVAGSQ (97 aa)) the chain is on the extracellular side. Residue Lys-39 forms a Glycyl lysine isopeptide (Lys-Gly) (interchain with G-Cter in ubiquitin) linkage. Residues Ser-48 and Ser-50 each carry the phosphoserine modification. A helical transmembrane segment spans residues 98-118 (AVFFIVWIILIIWVVIGIVYN). Topologically, residues 119-225 (APFNWQVVMQ…SNVASRYMGS (107 aa)) are cytoplasmic. The helical transmembrane segment at 226–246 (IAAMVIFWIGIFVWIGCGAIP) threads the bilayer. The Extracellular segment spans residues 247–271 (KDAGNTPPYTGETTGSNPRLKKFSD). A helical transmembrane segment spans residues 272-292 (AWQMYINTAVAVSLLICTTFL). The Cytoplasmic segment spans residues 293–354 (QNIRARHDYF…GRKMIDWYAD (62 aa)). A helical transmembrane segment spans residues 355–375 (IIGTGIGVLIGVAVFATWIGI). Topologically, residues 376–383 (GSPMKWDD) are extracellular. A helical transmembrane segment spans residues 384-404 (NWWLIIGTYTGLIGFLDGFVL). Residues 405–465 (REVYFRIVQH…SQYINRICST (61 aa)) are Cytoplasmic-facing. Residues 466 to 486 (PWSVLVSVIIIIGLICIASGL) form a helical membrane-spanning segment. Residues 487-493 (RWSTTGQ) are Extracellular-facing. The helical transmembrane segment at 494–514 (LIANTPTMIIEEFFLLVLLQA) threads the bilayer. Residues 515–552 (HNWADRQRRVEVTALYARRRILLSYVEKRFPEVMMLEK) are Cytoplasmic-facing.

This sequence belongs to the FET4 family.

The protein localises to the membrane. Required for Fe(2+) ion low affinity uptake. The sequence is that of Low-affinity Fe(2+) transport protein (FET4) from Saccharomyces cerevisiae (strain ATCC 204508 / S288c) (Baker's yeast).